Here is a 1268-residue protein sequence, read N- to C-terminus: MGTKWTEEQELAINTRKCNLLVAAAAGSGKTAVLVERIIKMITEGENPVDIDKLLVVTFTNAAASEMRERIGDAISKALEKDPSSKVLQRQLALLNRASITTMHSFCLEVIKNNFHLIDLDPGFRIGDQTECELIKQDILADLFEDMYAKDDECFKDLVEAYGGSKSDDNLNSIILKFYNFIMSGPWPEAWLKDKVEEFNINSIEELEGKKWIEVLKESIILDLNNAYSMLTQARDIAEMGGGLEPYLVNINPEIIQVEELKIALSEGIVKFYNNLMGASFGRLKSVRKASVDDERALEKTKSLRDESKKIIENLRDNVFETSLEEAVLGMKKMYPLMKCLSGLVIEFSNRYRDKKREKDILDFNDLEHLCLEILIDKDEEGNIKPSQVALEFKDRFEEVLVDEYQDSNTIQETIVGMVSRRDIENPNVFMVGDVKQSIYKFRQANPELFLEKYINYREFEDSNRKIMLYKNFRSREEIINGVNYIFKTLMSNTVGELEYDEKEALNLGASYGELNEENVEKEYIDEIENLKVAGDIELNILNKAGNKDYSDEDELGEEEEDLDSIQLEARIIGKKINELMNPEDGSHYMVFDKDLGKYRKIKYKDIVILLRATKNWAETFVDELGTYGIPVYADTGTGYFQTIEIRTILALLHIIDNPMQDIYILSALRSPIFSFTSEEFADLRLLNKDKYFFEIIKEVVDGIYDESISKDLKGKCKYFLDYLNKWREKAAYMPIDEFIWFLYSDTSYYGYVGTMPNGVQRQANLRILFQRAKQYESTSFKGLFNFINFINKLKKSSGDMGSAKILGENENVVRIMSIHKSKGLEFPVVILGGTGKQFNKMDLREDILLHETLGIGTNCIDIKKRIKYDTLQKHAIKKKCELEVLSEEMRILYVAFTRAKEKLIITGAVSDLEKSCENWCKASASSEDNRINPGNVLKGKSYLDWIGMALTKHKDGDAIRNIGNGDITLNLDDKSNWSFKSWDRSELLETNNNKKEKNNIDIFESNNWIESKKDIKEVIEIRDRLGFKYKYIESCNTPSNISVTELKRAHQEEEFMQESYNIIDNESNEENKKEKIKRKPRFMEERQEEFSAAKKGTITHFVMQHIDLDKVTYIDEIREEVLKMVKKELLTEEEGKVVNVFKIQKFFKSDLGQRMLSSYKSGKKVYRELPFITEIPSSIIEKNLDPKIYGEEKVRLQGIIDAFFKEEDGYVLLDYKTDYVKEGEEENFINKYKIQINLYKDTLNKILGEEVKEAYLYSFYLEKELKI.

Positions 3–476 (TKWTEEQELA…IMLYKNFRSR (474 aa)) constitute a UvrD-like helicase ATP-binding domain. Residue 24 to 31 (AAAGSGKT) participates in ATP binding. Residues 528 to 824 (IENLKVAGDI…RIMSIHKSKG (297 aa)) form the UvrD-like helicase C-terminal domain.

The protein belongs to the helicase family. AddA subfamily. As to quaternary structure, heterodimer of AddA and AddB/RexB. Mg(2+) serves as cofactor.

The catalysed reaction is Couples ATP hydrolysis with the unwinding of duplex DNA by translocating in the 3'-5' direction.. It catalyses the reaction ATP + H2O = ADP + phosphate + H(+). The heterodimer acts as both an ATP-dependent DNA helicase and an ATP-dependent, dual-direction single-stranded exonuclease. Recognizes the chi site generating a DNA molecule suitable for the initiation of homologous recombination. The AddA nuclease domain is required for chi fragment generation; this subunit has the helicase and 3' -&gt; 5' nuclease activities. This chain is ATP-dependent helicase/nuclease subunit A, found in Clostridium perfringens (strain 13 / Type A).